The primary structure comprises 450 residues: Perilipin-2 (450 aa).

Ala2 is modified (N-acetylalanine). Ser215 is modified (phosphoserine). Tyr232 bears the Phosphotyrosine mark. Residues 411-450 (ESESAQAPGTTRRPGRWSRKHPKPVPVSNAEGSQPDDSSS) are disordered. The segment covering 423–433 (RPGRWSRKHPK) has biased composition (basic residues). Polar residues predominate over residues 440–450 (AEGSQPDDSSS).

It belongs to the perilipin family. In terms of assembly, interacts with IRGC. In terms of processing, acylated; primarily with C14, C16 and C18 fatty acids. Phosphorylation at Tyr-232 by isoform 1 of CHKA (CHKalpha2) promotes dissociation from lipid droplets: dissociation is followed by recruitment of autophagosome machinery to lipid droplets and subsequent lipid droplet lipolysis. Post-translationally, polyubiquitination of Nt-acetylatable A-PLIN2 by MARCHF6 lead to degradation by 26S proteasomes. In terms of tissue distribution, milk lipid globules.

It is found in the membrane. The protein resides in the lipid droplet. In terms of biological role, structural component of lipid droplets, which is required for the formation and maintenance of lipid storage droplets. In Bos taurus (Bovine), this protein is Perilipin-2 (PLIN2).